The primary structure comprises 325 residues: Cyclic AMP-responsive element-binding protein 1 (325 aa).

Composition is skewed to polar residues over residues 1 to 11 and 18 to 27; these read MESGAENQQSG and AESQQMTVQA. 2 disordered regions span residues 1-27 and 92-111; these read MESG…TVQA and SEDS…RREI. In terms of domain architecture, KID spans 85-144; that stretch reads QISTIAESEDSQESVDSVTDSQKRREILSRRPSYRKILNDLSSDAPGVPRIEEEKSEEET. Serine 117 carries the phosphoserine; by CaMK1, CaMK2, CaMK4, PKB/AKT1 or PKB/AKT2, RPS6KA3, RPS6KA4, RPS6KA5 and SGK1 modification. A Glycyl lysine isopeptide (Lys-Gly) (interchain with G-Cter in SUMO2) cross-link involves residue lysine 120. Positions 124–146 are disordered; it reads DLSSDAPGVPRIEEEKSEEETSA. Serine 126 carries the phosphoserine; by CaMK2 modification. A Phosphoserine; by HIPK2 modification is found at serine 255. A bZIP domain is found at 267–325; sequence ARKREVRLMKNREAARECRRKKKEYVKCLENRVAVLENQNKTLIEELKALKDLYCHKSD. The segment at 268-293 is basic motif; it reads RKREVRLMKNREAARECRRKKKEYVK. Residues lysine 269 and lysine 288 each participate in a glycyl lysine isopeptide (Lys-Gly) (interchain with G-Cter in SUMO1) cross-link. The segment at 295–316 is leucine-zipper; the sequence is LENRVAVLENQNKTLIEELKAL.

This sequence belongs to the bZIP family. Interacts with PPRC1. Binds DNA as a dimer. This dimer is stabilized by magnesium ions. Interacts, through the bZIP domain, with the coactivators CRTC1/TORC1, CRTC2/TORC2 and CRTC3/TORC3. When phosphorylated on Ser-117, binds CREBBP. Interacts with CREBL2; regulates CREB1 phosphorylation, stability and transcriptional activity. Interacts (phosphorylated form) with TOX3. Interacts with ARRB1. Binds to HIPK2. Interacts with SGK1. Interacts with TSSK4; this interaction facilitates phosphorylation on Ser-117. Forms a complex with KMT2A and CREBBP. Interacts with TOX4; CREB1 is required for full induction of TOX4-dependent activity and the interaction is increased by cAMP and inhibited by insulin. In terms of processing, sumoylated with SUMO1. Sumoylation on Lys-288, but not on Lys-269, is required for nuclear localization of this protein. Sumoylation is enhanced under hypoxia, promoting nuclear localization and stabilization. Post-translationally, stimulated by phosphorylation. Phosphorylation of both Ser-117 and Ser-126 in the SCN regulates the activity of CREB and participates in circadian rhythm generation. Phosphorylation of Ser-117 allows CREBBP binding. Phosphorylated upon calcium influx by CaMK4 and CaMK2 on Ser-117. CaMK4 is much more potent than CaMK2 in activating CREB. Phosphorylated by CaMK2 on Ser-126. Phosphorylation of Ser-126 blocks CREB-mediated transcription even when Ser-117 is phosphorylated. Phosphorylated by CaMK1. Phosphorylation of Ser-255 by HIPK2 in response to genotoxic stress promotes CREB1 activity, facilitating the recruitment of the coactivator CBP. Phosphorylated at Ser-117 by RPS6KA3, RPS6KA4 and RPS6KA5 in response to mitogenic or stress stimuli. CREBL2 positively regulates phosphorylation at Ser-117 thereby stimulating CREB1 transcriptional activity. In liver, phosphorylation is induced by fasting or glucagon in a circadian fashion. Phosphorylated by TSSK4 on Ser-117.

The protein resides in the nucleus. In terms of biological role, phosphorylation-dependent transcription factor that stimulates transcription upon binding to the DNA cAMP response element (CRE), a sequence present in many viral and cellular promoters. Transcription activation is enhanced by the TORC coactivators which act independently of Ser-117 phosphorylation. Involved in different cellular processes including the synchronization of circadian rhythmicity and the differentiation of adipose cells. Regulates the expression of apoptotic and inflammatory response factors in cardiomyocytes in response to ERFE-mediated activation of AKT signaling. The sequence is that of Cyclic AMP-responsive element-binding protein 1 (CREB1) from Bos taurus (Bovine).